Here is a 185-residue protein sequence, read N- to C-terminus: Ribosome-recycling factor (185 aa).

Belongs to the RRF family.

The protein localises to the cytoplasm. Functionally, responsible for the release of ribosomes from messenger RNA at the termination of protein biosynthesis. May increase the efficiency of translation by recycling ribosomes from one round of translation to another. The chain is Ribosome-recycling factor from Francisella tularensis subsp. tularensis (strain FSC 198).